We begin with the raw amino-acid sequence, 138 residues long: ATP synthase epsilon chain (138 aa).

Belongs to the ATPase epsilon chain family. As to quaternary structure, F-type ATPases have 2 components, CF(1) - the catalytic core - and CF(0) - the membrane proton channel. CF(1) has five subunits: alpha(3), beta(3), gamma(1), delta(1), epsilon(1). CF(0) has three main subunits: a, b and c.

It is found in the cell membrane. In terms of biological role, produces ATP from ADP in the presence of a proton gradient across the membrane. In Streptococcus suis (strain 98HAH33), this protein is ATP synthase epsilon chain.